We begin with the raw amino-acid sequence, 614 residues long: BPI fold-containing family B member 4 (614 aa).

An N-terminal signal peptide occupies residues 1-18; that stretch reads MWMAWCVAALSVVAVCGT. Asparagine 273 carries N-linked (GlcNAc...) asparagine glycosylation. The cysteines at positions 295 and 332 are disulfide-linked.

Belongs to the BPI/LBP/Plunc superfamily. BPI/LBP family. Expressed in nasal tissue.

Its subcellular location is the secreted. It localises to the cytoplasm. May have the capacity to recognize and bind specific classes of odorants. May act as a carrier molecule, transporting odorants across the mucus layer to access receptor sites. May serve as a primary defense mechanism by recognizing and removing potentially harmful odorants or pathogenic microorganisms from the mucosa or clearing excess odorant from mucus to enable new odorant stimuli to be received. In Homo sapiens (Human), this protein is BPI fold-containing family B member 4 (BPIFB4).